The sequence spans 326 residues: Nine-heme cytochrome c (326 aa).

The N-terminal stretch at 1–30 (MRNGTSLLLLAAIALAGAACLTAMGGTAKA) is a signal peptide. Heme is bound by residues His-67, His-70, Cys-77, Cys-80, His-81, His-82, Cys-89, Cys-92, His-93, His-111, Cys-127, Cys-130, His-131, Cys-141, Cys-144, His-145, Cys-157, Cys-160, His-161, His-227, His-230, His-248, Cys-255, Cys-258, His-259, His-260, Cys-271, Cys-274, His-275, His-294, Cys-297, Cys-300, His-301, Cys-314, Cys-317, and His-318.

Monomer. In terms of processing, binds 9 heme groups per subunit.

The protein resides in the periplasm. In terms of biological role, may form part of a transmembrane redox complex through which electrons are transferred to the cytoplasm for reduction of sulfate. This Desulfovibrio desulfuricans (strain ATCC 27774 / DSM 6949 / MB) protein is Nine-heme cytochrome c.